The sequence spans 347 residues: F-box/LRR-repeat/kelch-repeat protein At2g27520 (347 aa).

The F-box domain occupies 1-50; the sequence is MVRLDLPWDLVDEILSRLPATSLGRLRFTCKRWNALFKDPEFITKQFHKA. LRR repeat units lie at residues 59-82, 152-177, 196-220, and 261-285; these read LSNF…EIAQ, CKLV…NVEK, KFNI…LYQD, and LSWS…ILRI. One copy of the Kelch 1 repeat lies at 138–187; that stretch reads KSYDSYKILRITYGCKLVEIFELKSNSWRVLSKVHPNVEKHYYGGVSFKG. One copy of the Kelch 2 repeat lies at 306-347; it reads MIYIVGKNGFKKLSYEKDRSNLWRLPFFFSYVPSLVGLYPPM.

The polypeptide is F-box/LRR-repeat/kelch-repeat protein At2g27520 (Arabidopsis thaliana (Mouse-ear cress)).